Reading from the N-terminus, the 311-residue chain is MISILMQTLKIATRQSPLALWQAEHIRDRLQALYPELKVELVKFVTQGDKILDTPLAKIGGKGLFVKELEAALLDGRADLAVHSMKDVPMHLPEGLSLAVICEREDPLDAFVSNHVMSFDQLPLGARVGTSSLRRKCQILKQRPDLEIIDLRGNVGTRLAKLDDGQYDAIVLASAGLKRLGLISRIRHSINAEISLPAVGQGALGLECRANDKKILDLIAPLAHQPTSACVRAERAFNAYLEGGCQVPIAGFATLTQECLTLEGRVGSVDGKTLLKDHVEGHADQAEVLGVQLAKQLLAQGAGELLRDLYQ.

The residue at position 245 (Cys245) is an S-(dipyrrolylmethanemethyl)cysteine.

It belongs to the HMBS family. Monomer. The cofactor is dipyrromethane.

The enzyme catalyses 4 porphobilinogen + H2O = hydroxymethylbilane + 4 NH4(+). Its pathway is porphyrin-containing compound metabolism; protoporphyrin-IX biosynthesis; coproporphyrinogen-III from 5-aminolevulinate: step 2/4. Functionally, tetrapolymerization of the monopyrrole PBG into the hydroxymethylbilane pre-uroporphyrinogen in several discrete steps. The sequence is that of Porphobilinogen deaminase from Acinetobacter baylyi (strain ATCC 33305 / BD413 / ADP1).